Here is a 137-residue protein sequence, read N- to C-terminus: Insulin-like peptide 2 (137 aa).

Positions 1-26 are cleaved as a signal peptide; it reads MSKPLSFISMVAVILLASSTVKLAQG. Cystine bridges form between Cys29/Cys119, Cys41/Cys132, and Cys118/Cys123. The propeptide at 53-104 is connecting peptide; sequence AMPGADSDLDALNPLQFVQEFEEEDNSISEPLRSALFPGSYLGGVLNSLAEV.

This sequence belongs to the insulin family. In terms of assembly, heterodimer of a B chain and an A chain linked by two disulfide bonds. As to expression, broadly expressed at a low level in the embryonic mesoderm, beginning at stage 12. Expressed at a high level in the embryonic anterior midgut, with expression diminishing at late stage 16. Expressed at a low level in larval imaginal disks. Expressed at a high level in larval salivary glands and in seven cells of each larval brain hemisphere that may correspond to neurosecretory cells.

The protein localises to the secreted. Possible ligand of InR/insulin-like receptor. Functionally, plays a role in regulating body size by increasing cell size and cell number of individual organs. Probably mediates its growth effects by acting as a ligand for the insulin receptor and transducing a signal via the Chico/PI3K/Akt(PKB) pathway. The protein is Insulin-like peptide 2 of Drosophila melanogaster (Fruit fly).